The following is a 391-amino-acid chain: Chalcone synthase 2 (391 aa).

The active site involves Cys-164.

This sequence belongs to the thiolase-like superfamily. Chalcone/stilbene synthases family.

The catalysed reaction is (E)-4-coumaroyl-CoA + 3 malonyl-CoA + 3 H(+) = 2',4,4',6'-tetrahydroxychalcone + 3 CO2 + 4 CoA. Its pathway is secondary metabolite biosynthesis; flavonoid biosynthesis. Its function is as follows. The primary product of this enzyme is 4,2',4',6'-tetrahydroxychalcone (also termed naringenin-chalcone or chalcone) which can under specific conditions spontaneously isomerize into naringenin. The sequence is that of Chalcone synthase 2 (CHS2) from Citrus sinensis (Sweet orange).